The following is a 237-amino-acid chain: MAGTADAVAAAKRAAGYQAAEMVEDGMVIGLGTGSTVFYAIECLSGRIRDGLSVVGVPTSYQTAMKAREYGIPLTTLDDNPVLDLAIDGADQADPQFRLIKGRGAAITREKCVASAAFRFIVVVDEAKMVKKLAGVVPVETLPFATKTALAQLRGLGCRPFIREAVKKDGPVITDNGNFIVDCQFEEIPDPALLEAGIAAIPGVIESGLFTRLTGNTTIIVGNEKKCSVLTSPDVVP.

Residues 33–36 (TGST), 88–91 (DGAD), and 101–104 (KGRG) each bind substrate. The active-site Proton acceptor is E110. A substrate-binding site is contributed by K128.

It belongs to the ribose 5-phosphate isomerase family. In terms of assembly, homodimer.

The enzyme catalyses aldehydo-D-ribose 5-phosphate = D-ribulose 5-phosphate. Its pathway is carbohydrate degradation; pentose phosphate pathway; D-ribose 5-phosphate from D-ribulose 5-phosphate (non-oxidative stage): step 1/1. In terms of biological role, catalyzes the reversible conversion of ribose-5-phosphate to ribulose 5-phosphate. This chain is Ribose-5-phosphate isomerase A, found in Methanoregula boonei (strain DSM 21154 / JCM 14090 / 6A8).